Consider the following 224-residue polypeptide: Probable mitochondrial import inner membrane translocase subunit Tim17 4 (224 aa).

3 helical membrane passes run 16-36, 60-80, and 115-135; these read CGCA…LKGF, AIAG…CVMV, and AFVG…VATI.

It belongs to the Tim17/Tim22/Tim23 family. In terms of assembly, component of the TIM23 complex at least composed of Tim23, Tim17 (Tim17a1, Tim17a2 or Tim17b1) and a Tim50. The complex interacts with the Tim44 component of the PAM complex.

It is found in the mitochondrion inner membrane. In terms of biological role, essential component of the TIM23 complex, a complex that mediates the translocation of transit peptide-containing proteins across the mitochondrial inner membrane. The polypeptide is Probable mitochondrial import inner membrane translocase subunit Tim17 4 (Tim17a2) (Drosophila melanogaster (Fruit fly)).